A 292-amino-acid chain; its full sequence is Ribosomal protein L11 methyltransferase (292 aa).

S-adenosyl-L-methionine contacts are provided by T138, G159, D181, and N225.

Belongs to the methyltransferase superfamily. PrmA family.

The protein localises to the cytoplasm. It carries out the reaction L-lysyl-[protein] + 3 S-adenosyl-L-methionine = N(6),N(6),N(6)-trimethyl-L-lysyl-[protein] + 3 S-adenosyl-L-homocysteine + 3 H(+). Its function is as follows. Methylates ribosomal protein L11. This chain is Ribosomal protein L11 methyltransferase, found in Leuconostoc citreum (strain KM20).